The following is a 149-amino-acid chain: Large ribosomal subunit protein bL9 (149 aa).

The protein belongs to the bacterial ribosomal protein bL9 family.

Binds to the 23S rRNA. The protein is Large ribosomal subunit protein bL9 of Persephonella marina (strain DSM 14350 / EX-H1).